A 707-amino-acid polypeptide reads, in one-letter code: Toxin RTX-I translocation ATP-binding protein (707 aa).

The 125-residue stretch at M1–V125 folds into the Peptidase C39 domain. H83 is an active-site residue. Residues F154–Q436 form the ABC transmembrane type-1 domain. Transmembrane regions (helical) follow at residues L158–V178, F188–L208, L295–L315, V387–I407, and L410–L430. The region spanning I468 to Q703 is the ABC transporter domain. G502–S509 is a binding site for ATP.

This sequence belongs to the ABC transporter superfamily. Protein-1 exporter (TC 3.A.1.109) family. Homodimer.

It is found in the cell membrane. Functionally, involved in the transport of the toxin RTX-I as well as that of RTX-II. This chain is Toxin RTX-I translocation ATP-binding protein (apxIB), found in Actinobacillus pleuropneumoniae (Haemophilus pleuropneumoniae).